The sequence spans 306 residues: Acetyl-coenzyme A carboxylase carboxyl transferase subunit beta (306 aa).

A CoA carboxyltransferase N-terminal domain is found at 27–296; sequence LWHKCPSCDA…PRFVAPVIEP (270 aa). Zn(2+) contacts are provided by Cys-31, Cys-34, Cys-50, and Cys-53. A C4-type zinc finger spans residues 31 to 53; that stretch reads CPSCDAVLYRPELEKTLDVCPKC.

This sequence belongs to the AccD/PCCB family. Acetyl-CoA carboxylase is a heterohexamer composed of biotin carboxyl carrier protein (AccB), biotin carboxylase (AccC) and two subunits each of ACCase subunit alpha (AccA) and ACCase subunit beta (AccD). Requires Zn(2+) as cofactor.

It is found in the cytoplasm. The catalysed reaction is N(6)-carboxybiotinyl-L-lysyl-[protein] + acetyl-CoA = N(6)-biotinyl-L-lysyl-[protein] + malonyl-CoA. It functions in the pathway lipid metabolism; malonyl-CoA biosynthesis; malonyl-CoA from acetyl-CoA: step 1/1. Its function is as follows. Component of the acetyl coenzyme A carboxylase (ACC) complex. Biotin carboxylase (BC) catalyzes the carboxylation of biotin on its carrier protein (BCCP) and then the CO(2) group is transferred by the transcarboxylase to acetyl-CoA to form malonyl-CoA. The protein is Acetyl-coenzyme A carboxylase carboxyl transferase subunit beta of Pseudomonas syringae pv. tomato (strain ATCC BAA-871 / DC3000).